A 427-amino-acid polypeptide reads, in one-letter code: Glutamate-1-semialdehyde 2,1-aminomutase (427 aa).

Lys265 is subject to N6-(pyridoxal phosphate)lysine.

Belongs to the class-III pyridoxal-phosphate-dependent aminotransferase family. HemL subfamily. As to quaternary structure, homodimer. Pyridoxal 5'-phosphate is required as a cofactor.

It is found in the cytoplasm. The catalysed reaction is (S)-4-amino-5-oxopentanoate = 5-aminolevulinate. Its pathway is porphyrin-containing compound metabolism; protoporphyrin-IX biosynthesis; 5-aminolevulinate from L-glutamyl-tRNA(Glu): step 2/2. This chain is Glutamate-1-semialdehyde 2,1-aminomutase, found in Pasteurella multocida (strain Pm70).